The sequence spans 295 residues: Cyclin-G1 (295 aa).

It belongs to the cyclin family. Cyclin G subfamily.

Its subcellular location is the nucleus. Its function is as follows. May play a role in growth regulation. Is associated with G2/M phase arrest in response to DNA damage. May be an intermediate by which p53 mediates its role as an inhibitor of cellular proliferation. This Bos taurus (Bovine) protein is Cyclin-G1 (CCNG1).